We begin with the raw amino-acid sequence, 879 residues long: DNA mismatch repair protein MutS (879 aa).

629-636 (GPNMAGKS) is a binding site for ATP.

It belongs to the DNA mismatch repair MutS family.

In terms of biological role, this protein is involved in the repair of mismatches in DNA. It is possible that it carries out the mismatch recognition step. This protein has a weak ATPase activity. This is DNA mismatch repair protein MutS from Ruegeria sp. (strain TM1040) (Silicibacter sp.).